The sequence spans 86 residues: Gas vesicle protein M (86 aa).

It belongs to the gas vesicle GvpA family. As to quaternary structure, gvpF to GvpM interact with each other in vitro, and may form multi-subunit complex(es). Might interact with GvpA.

It localises to the gas vesicle. Its function is as follows. Proteins GvpF to GvpM might be involved in nucleating gas vesicle formation. A minor component of the gas vesicle. Gas vesicles are small, hollow, gas filled protein structures found in some microorganisms. They allow positioning of halobacteria at the optimal depth for growth in the poorly aerated, shallow brine pools of their habitat. Functionally, expression of a 9.5 kb mc-vac DNA fragment containing 2 divergently transcribed regions (gvpD-gvpE-gvpF-gvpG-gvpH-gvpI-gvpJ-gvpK-gvpL-gvpM and gvpA-gvpC-gvpN-gvpO) allows H.volcanii to produce gas vesicles. This is Gas vesicle protein M from Haloferax mediterranei (strain ATCC 33500 / DSM 1411 / JCM 8866 / NBRC 14739 / NCIMB 2177 / R-4) (Halobacterium mediterranei).